The primary structure comprises 101 residues: NADH-quinone oxidoreductase subunit K (101 aa).

3 consecutive transmembrane segments (helical) span residues 4-24, 30-50, and 61-81; these read LTHF…GIFL, IILL…FIAF, and IFVF…LAIL.

The protein belongs to the complex I subunit 4L family. NDH-1 is composed of 14 different subunits. Subunits NuoA, H, J, K, L, M, N constitute the membrane sector of the complex.

It localises to the cell inner membrane. The catalysed reaction is a quinone + NADH + 5 H(+)(in) = a quinol + NAD(+) + 4 H(+)(out). In terms of biological role, NDH-1 shuttles electrons from NADH, via FMN and iron-sulfur (Fe-S) centers, to quinones in the respiratory chain. The immediate electron acceptor for the enzyme in this species is believed to be ubiquinone. Couples the redox reaction to proton translocation (for every two electrons transferred, four hydrogen ions are translocated across the cytoplasmic membrane), and thus conserves the redox energy in a proton gradient. This Chromobacterium violaceum (strain ATCC 12472 / DSM 30191 / JCM 1249 / CCUG 213 / NBRC 12614 / NCIMB 9131 / NCTC 9757 / MK) protein is NADH-quinone oxidoreductase subunit K.